The primary structure comprises 306 residues: MDQKDCSHFFYRPECPDINNLRALSISNRWLESDFIIEDDYQYLDCLTEDELIFYRFIFTFLSAADDLVNVNLGSLTQLFSQKDIHHYYIEQECIEVVHARVYSQIQLMLFRGDESLRVQYVNVTINNPSIQQKVQWLEEKVRDNPSVAEKYILMILIEGIFFVSSFAAIAYLRNNGLFVVTCQFNDLISRDEAIHTSASCCIYNNYVPEKPAITRIHQLFSEAVEIECAFLKSHAPKTRLVNVDAITQYVKFSADRLLSAINVPKLFNTPPPDSDFPLAFMIADKNTNFFERHSTSYAGTVINDL.

Fe cation contacts are provided by D66, E96, and H99. The active site involves Y103. The chain crosses the membrane as a helical span at residues 153–173 (ILMILIEGIFFVSSFAAIAYL). Residues E159, E193, and H196 each contribute to the Fe cation site.

The protein belongs to the ribonucleoside diphosphate reductase small chain family. In terms of assembly, heterotetramer composed of a homodimer of the large subunit (R1) and a homodimer of the small subunit (R2). Larger multisubunit protein complex are also active, composed of (R1)n(R2)n. Fe cation serves as cofactor.

Its subcellular location is the host membrane. It catalyses the reaction a 2'-deoxyribonucleoside 5'-diphosphate + [thioredoxin]-disulfide + H2O = a ribonucleoside 5'-diphosphate + [thioredoxin]-dithiol. In terms of biological role, ribonucleoside-diphosphate reductase holoenzyme provides the precursors necessary for viral DNA synthesis. Allows virus growth in non-dividing cells, as well as reactivation from latency in infected hosts. Catalyzes the biosynthesis of deoxyribonucleotides from the corresponding ribonucleotides. In Varicella-zoster virus (strain Dumas) (HHV-3), this protein is Ribonucleoside-diphosphate reductase small subunit.